The chain runs to 454 residues: tRNA modification GTPase MnmE (454 aa).

Positions 23, 80, and 120 each coordinate (6S)-5-formyl-5,6,7,8-tetrahydrofolate. The TrmE-type G domain occupies 216-377 (GMKVVIAGRP…LRNHLKQSMG (162 aa)). Position 226 (Asn226) interacts with K(+). GTP-binding positions include 226-231 (NAGKSS), 245-251 (TDIAGTT), 270-273 (DTAG), 335-338 (NKAD), and 358-360 (SAR). Residue Ser230 coordinates Mg(2+). 3 residues coordinate K(+): Thr245, Ile247, and Thr250. Thr251 contributes to the Mg(2+) binding site. A (6S)-5-formyl-5,6,7,8-tetrahydrofolate-binding site is contributed by Lys454.

It belongs to the TRAFAC class TrmE-Era-EngA-EngB-Septin-like GTPase superfamily. TrmE GTPase family. Homodimer. Heterotetramer of two MnmE and two MnmG subunits. K(+) serves as cofactor.

The protein localises to the cytoplasm. In terms of biological role, exhibits a very high intrinsic GTPase hydrolysis rate. Involved in the addition of a carboxymethylaminomethyl (cmnm) group at the wobble position (U34) of certain tRNAs, forming tRNA-cmnm(5)s(2)U34. In Klebsiella pneumoniae (strain 342), this protein is tRNA modification GTPase MnmE.